Consider the following 141-residue polypeptide: MLTAEDKKLIQAIWDKVQGHQEDFGAEALQRMFITYPTTKTYFPHFDLSPGSDQVRSHGKKVVNALGNAVKSMDNLSQALSELSNLHAYNLRVDPVNFKLLSQCFQVVLAVHLGKEYTPEVHSAFDKFLSAVAAVLAEKYR.

Residues 1–141 form the Globin domain; the sequence is MLTAEDKKLI…VAAVLAEKYR (141 aa). The heme b site is built by His-58 and His-87.

Belongs to the globin family. As to quaternary structure, heterotetramer of two alpha-D chains and two beta chains. In terms of tissue distribution, red blood cells.

Involved in oxygen transport from the lung to the various peripheral tissues. The chain is Hemoglobin subunit alpha-D (HBAD) from Accipiter gentilis (Northern goshawk).